The sequence spans 147 residues: MSLRLNDLKPALGASSSRARVGRGIGSGLGKTAGRGHKGSFARKGGGKIKPGFEGGQTPMQRRLPKIGFRSRSVANTAEVLSYKLDNLEPGEIDFASLRLAKLVPSTAKKAKIVKKGRLTKVFVLKGIESTAGARAMIEATGGSFQE.

Residues 16–63 form a disordered region; it reads SSRARVGRGIGSGLGKTAGRGHKGSFARKGGGKIKPGFEGGQTPMQRR. The segment covering 23–33 has biased composition (gly residues); sequence RGIGSGLGKTA. Residues 34 to 47 show a composition bias toward basic residues; that stretch reads GRGHKGSFARKGGG.

The protein belongs to the universal ribosomal protein uL15 family. In terms of assembly, part of the 50S ribosomal subunit.

Binds to the 23S rRNA. This chain is Large ribosomal subunit protein uL15, found in Xylella fastidiosa (strain Temecula1 / ATCC 700964).